Reading from the N-terminus, the 501-residue chain is Splicing factor ESS-2 homolog (501 aa).

Low complexity-rich tracts occupy residues 1–18 (MSAT…GTPG) and 105–115 (ISGTGRSTSRR). Disordered stretches follow at residues 1-20 (MSAT…PGSL) and 105-163 (ISGT…GRDT). Residues 126–151 (TPVSQAKCSNTPLPNSRATDTPFSTD) are compositionally biased toward polar residues. Over residues 152 to 163 (GSEKSDAEGRDT) the composition is skewed to basic and acidic residues. Phosphoserine is present on residues serine 409 and serine 411. A disordered region spans residues 425–471 (RGTPRLRHTPSPMSGRKRKVTPGVVRSTNTPILGEPKPKQQAKISTP).

The protein belongs to the ESS2 family.

Its subcellular location is the nucleus. This Drosophila melanogaster (Fruit fly) protein is Splicing factor ESS-2 homolog (Es2).